Here is a 402-residue protein sequence, read N- to C-terminus: 3-isopropylmalate dehydratase large subunit 2 (402 aa).

C280, C341, and C344 together coordinate [4Fe-4S] cluster.

It belongs to the aconitase/IPM isomerase family. LeuC type 2 subfamily. Heterodimer of LeuC and LeuD. It depends on [4Fe-4S] cluster as a cofactor.

It catalyses the reaction (2R,3S)-3-isopropylmalate = (2S)-2-isopropylmalate. Its pathway is amino-acid biosynthesis; L-leucine biosynthesis; L-leucine from 3-methyl-2-oxobutanoate: step 2/4. Functionally, catalyzes the isomerization between 2-isopropylmalate and 3-isopropylmalate, via the formation of 2-isopropylmaleate. The chain is 3-isopropylmalate dehydratase large subunit 2 from Methanopyrus kandleri (strain AV19 / DSM 6324 / JCM 9639 / NBRC 100938).